We begin with the raw amino-acid sequence, 142 residues long: Transcription antitermination protein NusB (142 aa).

Belongs to the NusB family.

Its function is as follows. Involved in transcription antitermination. Required for transcription of ribosomal RNA (rRNA) genes. Binds specifically to the boxA antiterminator sequence of the ribosomal RNA (rrn) operons. The polypeptide is Transcription antitermination protein NusB (Streptococcus mutans serotype c (strain ATCC 700610 / UA159)).